We begin with the raw amino-acid sequence, 316 residues long: Ribosomal RNA small subunit methyltransferase H (316 aa).

Residues alanine 35–histidine 37, aspartate 55, phenylalanine 84, aspartate 105, and glutamine 112 each bind S-adenosyl-L-methionine.

Belongs to the methyltransferase superfamily. RsmH family.

Its subcellular location is the cytoplasm. It carries out the reaction cytidine(1402) in 16S rRNA + S-adenosyl-L-methionine = N(4)-methylcytidine(1402) in 16S rRNA + S-adenosyl-L-homocysteine + H(+). Specifically methylates the N4 position of cytidine in position 1402 (C1402) of 16S rRNA. The polypeptide is Ribosomal RNA small subunit methyltransferase H (Streptococcus thermophilus (strain CNRZ 1066)).